A 793-amino-acid polypeptide reads, in one-letter code: Serine/threonine-protein phosphatase BSU1 (793 aa).

5 Kelch repeats span residues 53–109, 110–160, 214–262, 264–314, and 329–388; these read STTA…LYGT, LILI…IAAQ, IFLL…VFGG, KLHV…NQYQ, and HLYV…EASS. Phosphoserine occurs at positions 395 and 444. 4 residues coordinate Mn(2+): aspartate 510, histidine 512, aspartate 544, and asparagine 576. The active-site Proton donor is histidine 577. Positions 629 and 707 each coordinate Mn(2+). Serine 764 carries the post-translational modification Phosphoserine.

It belongs to the PPP phosphatase family. BSU subfamily. Interacts with CDG1, CDL1 and ASK7/BIN2. Mn(2+) serves as cofactor. In terms of processing, phosphorylated at Ser-395 and Ser-444. Phosphorylated at Ser-764 by CDG1 and CDL1. Mainly expressed in young, elongating tissues. In young seedlings, it is expressed at the base of the hypocotyl, at the tip and most peripheral cell layers of cotyledons, and in the vascular cylinder of roots, particularly in the elongation zone and at the point of emergence of lateral roots. In mature plants, it is still present in the root vasculature, but almost completely absent in fully expanded stems and leaves. In flowers, it is mainly expressed in sepal veins, anther filaments, and in the style, suggesting that BSU1 is expressed in actively growing regions and apparently enriched in vascular tissues.

Its subcellular location is the nucleus. The enzyme catalyses O-phospho-L-seryl-[protein] + H2O = L-seryl-[protein] + phosphate. It carries out the reaction O-phospho-L-threonyl-[protein] + H2O = L-threonyl-[protein] + phosphate. Its activity is regulated as follows. Activated by phosphorylation at Ser-764 by CDG1. In terms of biological role, phosphatase that acts as a positive regulator of brassinosteroid (BR) signaling. Dephosphorylates BES1, a transcription factor that regulates the expression of BR-response genes, thereby playing an important role in the regulation of response to BRs. Inactivates the negative regulator of BR signaling ASK7/BIN2 by dephosphorylation at 'Tyr-200'. This chain is Serine/threonine-protein phosphatase BSU1 (BSU1), found in Arabidopsis thaliana (Mouse-ear cress).